Consider the following 407-residue polypeptide: DNA primase DnaG (407 aa).

The Toprim domain occupies 172-248 (DWIIVVEGRA…HIDYVARAPP (77 aa)). Mg(2+) is bound by residues Glu-178, Asp-222, and Asp-224. The segment at 279–304 (AGAEKTEAAAPPPQQPTAPPAAPSQQ) is disordered. A compositionally biased stretch (pro residues) spans 288–300 (APPPQQPTAPPAA).

Belongs to the archaeal DnaG primase family. As to quaternary structure, forms a ternary complex with MCM helicase and DNA. Component of the archaeal exosome complex. It depends on Mg(2+) as a cofactor.

It carries out the reaction ssDNA + n NTP = ssDNA/pppN(pN)n-1 hybrid + (n-1) diphosphate.. Its function is as follows. RNA polymerase that catalyzes the synthesis of short RNA molecules used as primers for DNA polymerase during DNA replication. Also part of the exosome, which is a complex involved in RNA degradation. Acts as a poly(A)-binding protein that enhances the interaction between heteromeric, adenine-rich transcripts and the exosome. This is DNA primase DnaG from Pyrobaculum calidifontis (strain DSM 21063 / JCM 11548 / VA1).